The primary structure comprises 436 residues: D-aminoacyl-tRNA deacylase (436 aa).

Belongs to the DtdA deacylase family. In terms of assembly, monomer. Requires Zn(2+) as cofactor.

It catalyses the reaction a D-aminoacyl-tRNA + H2O = a tRNA + a D-alpha-amino acid + H(+). It carries out the reaction glycyl-tRNA(Ala) + H2O = tRNA(Ala) + glycine + H(+). D-aminoacyl-tRNA deacylase with broad substrate specificity. By recycling D-aminoacyl-tRNA to D-amino acids and free tRNA molecules, this enzyme counteracts the toxicity associated with the formation of D-aminoacyl-tRNA entities in vivo. In Methanoregula boonei (strain DSM 21154 / JCM 14090 / 6A8), this protein is D-aminoacyl-tRNA deacylase.